The primary structure comprises 94 residues: Large ribosomal subunit protein bL28A (94 aa).

A disordered region spans residues 63–94 (GHRGRRRAARAGSAPAHFARQAGSSLRTAAIL). A compositionally biased stretch (low complexity) spans 72 to 82 (RAGSAPAHFAR). Residues 84 to 94 (AGSSLRTAAIL) show a composition bias toward polar residues.

This sequence belongs to the bacterial ribosomal protein bL28 family.

The polypeptide is Large ribosomal subunit protein bL28A (rpmB1) (Mycobacterium bovis (strain ATCC BAA-935 / AF2122/97)).